Reading from the N-terminus, the 801-residue chain is Phenylalanine--tRNA ligase beta subunit (801 aa).

The tRNA-binding domain maps to 39–153 (AEGLSKLVVG…DEAVPGDAIF (115 aa)). The region spanning 406 to 481 (TEPVEVSTNL…RIYGYDKLPT (76 aa)) is the B5 domain. Residues Asp459, Asp465, Glu468, and Glu469 each contribute to the Mg(2+) site. The region spanning 708–801 (TKFPAMTRDI…LTEQVGAEVR (94 aa)) is the FDX-ACB domain.

It belongs to the phenylalanyl-tRNA synthetase beta subunit family. Type 1 subfamily. Tetramer of two alpha and two beta subunits. Requires Mg(2+) as cofactor.

Its subcellular location is the cytoplasm. It catalyses the reaction tRNA(Phe) + L-phenylalanine + ATP = L-phenylalanyl-tRNA(Phe) + AMP + diphosphate + H(+). The sequence is that of Phenylalanine--tRNA ligase beta subunit from Streptococcus pyogenes serotype M3 (strain SSI-1).